The primary structure comprises 594 residues: Glutamate decarboxylase 1 (594 aa).

The span at 1 to 13 shows a compositional bias: low complexity; sequence MASSTPSSSATSS. The segment at 1-23 is disordered; the sequence is MASSTPSSSATSSNAGADPNTTN. Residue S78 is modified to Phosphoserine. 4-aminobutanoate is bound at residue 190–192; the sequence is QLS. K405 carries the N6-(pyridoxal phosphate)lysine modification. R567 is a 4-aminobutanoate binding site.

The protein belongs to the group II decarboxylase family. In terms of assembly, homodimer. Requires pyridoxal 5'-phosphate as cofactor.

The enzyme catalyses L-glutamate + H(+) = 4-aminobutanoate + CO2. Functionally, catalyzes the synthesis of the inhibitory neurotransmitter gamma-aminobutyric acid (GABA) with pyridoxal 5'-phosphate as cofactor. This is Glutamate decarboxylase 1 (GAD1) from Pongo abelii (Sumatran orangutan).